A 342-amino-acid polypeptide reads, in one-letter code: Holliday junction branch migration complex subunit RuvB (342 aa).

Positions M1–Y179 are large ATPase domain (RuvB-L). Residues I18, R19, G60, K63, T64, T65, E126–F128, R169, Y179, and R216 each bind ATP. T64 contacts Mg(2+). The small ATPAse domain (RuvB-S) stretch occupies residues N180–E250. Residues H253–E342 are head domain (RuvB-H). The DNA site is built by R289, R308, and R313.

Belongs to the RuvB family. As to quaternary structure, homohexamer. Forms an RuvA(8)-RuvB(12)-Holliday junction (HJ) complex. HJ DNA is sandwiched between 2 RuvA tetramers; dsDNA enters through RuvA and exits via RuvB. An RuvB hexamer assembles on each DNA strand where it exits the tetramer. Each RuvB hexamer is contacted by two RuvA subunits (via domain III) on 2 adjacent RuvB subunits; this complex drives branch migration. In the full resolvosome a probable DNA-RuvA(4)-RuvB(12)-RuvC(2) complex forms which resolves the HJ.

Its subcellular location is the cytoplasm. It carries out the reaction ATP + H2O = ADP + phosphate + H(+). The RuvA-RuvB-RuvC complex processes Holliday junction (HJ) DNA during genetic recombination and DNA repair, while the RuvA-RuvB complex plays an important role in the rescue of blocked DNA replication forks via replication fork reversal (RFR). RuvA specifically binds to HJ cruciform DNA, conferring on it an open structure. The RuvB hexamer acts as an ATP-dependent pump, pulling dsDNA into and through the RuvAB complex. RuvB forms 2 homohexamers on either side of HJ DNA bound by 1 or 2 RuvA tetramers; 4 subunits per hexamer contact DNA at a time. Coordinated motions by a converter formed by DNA-disengaged RuvB subunits stimulates ATP hydrolysis and nucleotide exchange. Immobilization of the converter enables RuvB to convert the ATP-contained energy into a lever motion, pulling 2 nucleotides of DNA out of the RuvA tetramer per ATP hydrolyzed, thus driving DNA branch migration. The RuvB motors rotate together with the DNA substrate, which together with the progressing nucleotide cycle form the mechanistic basis for DNA recombination by continuous HJ branch migration. Branch migration allows RuvC to scan DNA until it finds its consensus sequence, where it cleaves and resolves cruciform DNA. The sequence is that of Holliday junction branch migration complex subunit RuvB from Rickettsia felis (strain ATCC VR-1525 / URRWXCal2) (Rickettsia azadi).